We begin with the raw amino-acid sequence, 517 residues long: Gallate 1-beta-glucosyltransferase 84A24 (517 aa).

The active-site Proton acceptor is H19. H19 is a binding site for an anthocyanidin. UDP-alpha-D-glucose-binding residues include Q344, H359, W362, N363, S364, and E367. Residue G382 coordinates an anthocyanidin. Residues D383 and Q384 each coordinate UDP-alpha-D-glucose.

It belongs to the UDP-glycosyltransferase family. As to expression, highly expressed in leaf. Also expressed in peel, stem, root and aril.

The protein localises to the cytoplasm. It carries out the reaction 3,4,5-trihydroxybenzoate + UDP-alpha-D-glucose = 1-O-galloyl-beta-D-glucose + UDP. It catalyses the reaction 3,4-dihydroxybenzoate + UDP-alpha-D-glucose = 1-O-(3,4-dihydroxy-benzoyl)-beta-D-glucose + UDP. The catalysed reaction is 4-hydroxybenzoate + UDP-alpha-D-glucose = 4-(beta-D-glucosyloxy)benzoate + UDP + H(+). The enzyme catalyses (E)-cinnamate + UDP-alpha-D-glucose = 1-O-(trans-cinnamoyl)-beta-D-glucose + UDP. It carries out the reaction (E)-sinapate + UDP-alpha-D-glucose = 1-O-(trans-sinapoyl)-beta-D-glucose + UDP. It catalyses the reaction (E)-4-coumarate + UDP-alpha-D-glucose = 1-O-(trans-4-coumaroyl)-beta-D-glucose + UDP. The catalysed reaction is (E)-caffeate + UDP-alpha-D-glucose = 1-O-[(E)-caffeoyl]-beta-D-glucose + UDP. The enzyme catalyses (E)-ferulate + UDP-alpha-D-glucose = 1-O-[(E)-feruloyl]-beta-D-glucose + UDP. It carries out the reaction genistein + UDP-alpha-D-glucose = genistein 7-O-beta-D-glucoside + UDP + H(+). It catalyses the reaction apigenin + UDP-alpha-D-glucose = apigenin 7-O-beta-D-glucoside + UDP + H(+). The catalysed reaction is luteolin + UDP-alpha-D-glucose = luteolin 7-O-beta-D-glucoside + UDP + H(+). Its function is as follows. Glucosyltransferase that catalyzes the formation of 1-O-beta-D-glucose esters with hydroxybenzoic acids and cinnamic acid including its derivatives as preferred glucosyl acceptors. Has significant activity with gallic acid (3,4,5-trihydroxybenzoic acid), 3,4-dihydroxybenzoic acid, 4-hydroxybenzoic acid, cinnamic acid, sinapic acid, coumaric acid, caffeic acid and ferulic acid in vitro. Gallic acid is the predicted native substrate of the enzyme, which thus catalyzes the formation of 1-O-galloyl-beta-D-glucose, the first committed step of hydrolyzable tannins (HTs) biosynthesis, with punicalagin isomers being the major HTs of pomegranate. Catalyzes the formation of flavonoid glucosides with genistein, apigenin and luteolin in vitro. Has low activity with benzoic acid, 2-hydroxybenzoic acid, 3-hydroxybenzoic acid, 2,4-dihydroxybenzoic acid, naringenin and quercetin. No activity with catechol, resveratrol, chlorogenic acid, catechin and epicatechin (building blocks of proanthocyanidins) or cyanidin, delphinidin and pelargonidin (the three anthocyanidins). In Punica granatum (Pomegranate), this protein is Gallate 1-beta-glucosyltransferase 84A24.